Consider the following 452-residue polypeptide: 5'-nucleotidase domain-containing protein 1 (452 aa).

The active-site Nucleophile is the D16. Positions 16 and 18 each coordinate Mg(2+). D18 acts as the Proton donor in catalysis. Residue K171 is modified to N6-acetyllysine. Residue D313 coordinates Mg(2+). Over residues 339 to 361 (GDKDGKPEESEPEEKKGKYEGSK) the composition is skewed to basic and acidic residues. The segment at 339–365 (GDKDGKPEESEPEEKKGKYEGSKAKPL) is disordered.

The protein belongs to the 5'(3')-deoxyribonucleotidase family.

This is 5'-nucleotidase domain-containing protein 1 (NT5DC1) from Bos taurus (Bovine).